A 488-amino-acid chain; its full sequence is 3-octaprenyl-4-hydroxybenzoate carboxy-lyase (488 aa).

Position 172 (Asn-172) interacts with Mn(2+). Residues 175–177, 189–191, and 194–195 contribute to the prenylated FMN site; these read IYR, RWL, and RG. Glu-238 contributes to the Mn(2+) binding site. The active-site Proton donor is the Asp-287.

The protein belongs to the UbiD family. As to quaternary structure, homohexamer. Requires prenylated FMN as cofactor. Mn(2+) is required as a cofactor.

It localises to the cell membrane. It catalyses the reaction a 4-hydroxy-3-(all-trans-polyprenyl)benzoate + H(+) = a 2-(all-trans-polyprenyl)phenol + CO2. Its pathway is cofactor biosynthesis; ubiquinone biosynthesis. Functionally, catalyzes the decarboxylation of 3-octaprenyl-4-hydroxy benzoate to 2-octaprenylphenol, an intermediate step in ubiquinone biosynthesis. The protein is 3-octaprenyl-4-hydroxybenzoate carboxy-lyase of Stutzerimonas stutzeri (strain A1501) (Pseudomonas stutzeri).